We begin with the raw amino-acid sequence, 138 residues long: U1 small nuclear ribonucleoprotein C (138 aa).

A Matrin-type zinc finger spans residues 4 to 36 (YYCDYCDTFLTHDSPSVRKTHNNGRKHKENVRF). The segment at 58-138 (QSKPNSQMPP…MGRPPMSLRS (81 aa)) is disordered. Positions 67 to 109 (PNAPPGLMPPPGMLPPPGGMPPGRMPPQGLPFPPPGPIPPPPG) are enriched in pro residues. Low complexity predominate over residues 113 to 138 (MRPPHGQMHMGGPRPQMGRPPMSLRS).

The protein belongs to the U1 small nuclear ribonucleoprotein C family. In terms of assembly, U1 snRNP is composed of the 7 core Sm proteins B/B', D1, D2, D3, E, F and G that assemble in a heptameric protein ring on the Sm site of the small nuclear RNA to form the core snRNP, and at least 3 U1 snRNP-specific proteins U1-70K, U1-A and U1-C. U1-C interacts with U1 snRNA and the 5' splice-site region of the pre-mRNA.

The protein localises to the nucleus. Its function is as follows. Component of the spliceosomal U1 snRNP, which is essential for recognition of the pre-mRNA 5' splice-site and the subsequent assembly of the spliceosome. U1-C is directly involved in initial 5' splice-site recognition for both constitutive and regulated alternative splicing. The interaction with the 5' splice-site seems to precede base-pairing between the pre-mRNA and the U1 snRNA. Stimulates commitment or early (E) complex formation by stabilizing the base pairing of the 5' end of the U1 snRNA and the 5' splice-site region. This is U1 small nuclear ribonucleoprotein C from Nematostella vectensis (Starlet sea anemone).